The chain runs to 966 residues: Mitogen-activated protein kinase kinase kinase 13 (966 aa).

The disordered stretch occupies residues M1–G59. Positions L8 to S19 are enriched in low complexity. The Protein kinase domain maps to I168–I409. ATP is bound by residues L174–V182 and K195. Residue D279 is the Proton acceptor of the active site. Leucine-zipper stretches follow at residues V433–L454 and L486–V507. Residues R457–R496 are a coiled coil. Disordered regions lie at residues E561–I663, L743–A874, and Q937–W966. Positions S567–K581 are enriched in low complexity. The span at S582–N594 shows a compositional bias: basic residues. Polar residues predominate over residues Q609 to H622. The segment covering P629–Q642 has biased composition (low complexity). Residues D814–V827 show a composition bias toward acidic residues. An acidic region spans residues S815 to E828. Residues S840–V855 show a composition bias toward polar residues. Residues E939 to C950 show a composition bias toward acidic residues. Positions T954 to W966 are enriched in polar residues.

The protein belongs to the protein kinase superfamily. Ser/Thr protein kinase family. In terms of assembly, homodimer; forms dimers through the leucine-zipper motif. Interacts with the C-terminus of MAPK8IP1 through the kinase catalytic domain. Binds PRDX3. Associates with the IKK complex through the kinase domain. The cofactor is Mg(2+). In terms of processing, autophosphorylated on serine and threonine residues.

It localises to the cytoplasm. The protein resides in the membrane. It carries out the reaction L-seryl-[protein] + ATP = O-phospho-L-seryl-[protein] + ADP + H(+). The catalysed reaction is L-threonyl-[protein] + ATP = O-phospho-L-threonyl-[protein] + ADP + H(+). Activated by autophosphorylation and homodimerization. Its function is as follows. Activates the JUN N-terminal pathway through activation of the MAP kinase kinase MAP2K7. Acts synergistically with PRDX3 to regulate the activation of NF-kappa-B in the cytosol. This activation is kinase-dependent and involves activating the IKK complex, the IKBKB-containing complex that phosphorylates inhibitors of NF-kappa-B. This Bos taurus (Bovine) protein is Mitogen-activated protein kinase kinase kinase 13 (MAP3K13).